Reading from the N-terminus, the 37-residue chain is Large ribosomal subunit protein bL36 (37 aa).

This sequence belongs to the bacterial ribosomal protein bL36 family.

The chain is Large ribosomal subunit protein bL36 from Desulforamulus reducens (strain ATCC BAA-1160 / DSM 100696 / MI-1) (Desulfotomaculum reducens).